Reading from the N-terminus, the 720-residue chain is Connector enhancer of kinase suppressor of ras 1 (720 aa).

The 64-residue stretch at 7 to 70 (WTPGKVATWL…LGGVEQLQAL (64 aa)) folds into the SAM domain. Residues 78–164 (NLQSLTEGLL…QVLHEDGPAA (87 aa)) form the CRIC domain. The PDZ domain maps to 196-285 (KAVLEQVQLD…GLSLVLKKIP (90 aa)). Residues 285–390 (PIPETPPQTP…RKKSKGLATR (106 aa)) are disordered. The segment covering 304–317 (RSPSLSLAPLSPRA) has biased composition (low complexity). Phosphoserine occurs at positions 307 and 314. A compositionally biased stretch (pro residues) spans 348 to 359 (EPLPIPPEPPAI). Over residues 379–390 (VGRKKSKGLATR) the composition is skewed to basic residues. Positions 403 to 502 (RPDCDGWLLL…WVRHLITCIS (100 aa)) constitute a PH domain. The segment at 504-573 (YQSPGRAPPP…TSFGSLTDSS (70 aa)) is disordered. Residues 518-530 (CYSETEAEDPDDE) are compositionally biased toward acidic residues. Residues 533 to 546 (SHSASPSPAQAGSP) are compositionally biased toward low complexity. Residues 553–571 (PAATPTQRSPRTSFGSLTD) are compositionally biased toward polar residues. A coiled-coil region spans residues 615–646 (QLNERVHRVRALQSTLKAKLQELQVLEEVLGD). The segment at 676 to 720 (QAEGSSHILTSDSTEQSPHSLPSDPEEHSHLCPLTSESSLRPPDL) is disordered. A compositionally biased stretch (polar residues) spans 678–695 (EGSSHILTSDSTEQSPHS).

The protein belongs to the CNKSR family. As to quaternary structure, interacts with RHO and RALGDS. In terms of processing, phosphorylated on tyrosine.

The protein localises to the cytoplasm. It is found in the membrane. Its function is as follows. May function as an adapter protein or regulator of Ras signaling pathways. The protein is Connector enhancer of kinase suppressor of ras 1 (CNKSR1) of Homo sapiens (Human).